We begin with the raw amino-acid sequence, 217 residues long: MSKISVAAVRQHVTDLLEYSNETKKRNFLETVELQIGLKNYDPQRDKRFSGTIRLPSIPRPNMSICILGDQHDIDRAKHGGVDAMSVDDLKKLNKNKKLIKKLARKYDAFVASEALIKQIPRLLGPGLSKAGKFPTPVSHSDDLTGKLNEVKSTIKFQLKKVLCMGVAVGNVGMTQEQLVGNIMLAINYLVSLLKKGWQNVGSLTIKATMSPPKRLY.

Belongs to the universal ribosomal protein uL1 family. In terms of assembly, component of the large ribosomal subunit (LSU). Mature N.crassa ribosomes consist of a small (40S) and a large (60S) subunit. The 40S small subunit contains 1 molecule of ribosomal RNA (18S rRNA) and at least 32 different proteins. The large 60S subunit contains 3 rRNA molecules (26S, 5.8S and 5S rRNA) and at least 42 different proteins. uL1 forms part of the L1 stalk.

It is found in the cytoplasm. Component of the ribosome, a large ribonucleoprotein complex responsible for the synthesis of proteins in the cell. The small ribosomal subunit (SSU) binds messenger RNAs (mRNAs) and translates the encoded message by selecting cognate aminoacyl-transfer RNA (tRNA) molecules. The large subunit (LSU) contains the ribosomal catalytic site termed the peptidyl transferase center (PTC), which catalyzes the formation of peptide bonds, thereby polymerizing the amino acids delivered by tRNAs into a polypeptide chain. The nascent polypeptides leave the ribosome through a tunnel in the LSU and interact with protein factors that function in enzymatic processing, targeting, and the membrane insertion of nascent chains at the exit of the ribosomal tunnel. uL1 forms part of the L1 stalk, a mobile element that plays a role in evacuating the exit-site tRNA. This Neurospora crassa (strain ATCC 24698 / 74-OR23-1A / CBS 708.71 / DSM 1257 / FGSC 987) protein is Large ribosomal subunit protein uL1 (crp-74).